A 274-amino-acid polypeptide reads, in one-letter code: Protein STAY-GREEN, chloroplastic (274 aa).

The transit peptide at 1 to 48 directs the protein to the chloroplast; sequence MAAATSTMSLIPPITQQQRWHAADSLVVLASRRHDSRRRRRCRYVVPR.

This sequence belongs to the staygreen family.

Its subcellular location is the plastid. It localises to the chloroplast. Functionally, involved in the disassembling mechanism of the intact light-harvesting complex of photosystem II (LHCPII) in the thylakoid membranes. Required to trigger chlorophyll degradation during natural and dark-induced leaf senescence. This is Protein STAY-GREEN, chloroplastic (SGR) from Oryza sativa subsp. indica (Rice).